A 308-amino-acid polypeptide reads, in one-letter code: Aspartate carbamoyltransferase catalytic subunit (308 aa).

Residues R59 and T60 each coordinate carbamoyl phosphate. An L-aspartate-binding site is contributed by K87. Carbamoyl phosphate is bound by residues R109, H137, and Q140. Positions 170 and 224 each coordinate L-aspartate. Positions 265 and 266 each coordinate carbamoyl phosphate.

The protein belongs to the aspartate/ornithine carbamoyltransferase superfamily. ATCase family. In terms of assembly, heterododecamer (2C3:3R2) of six catalytic PyrB chains organized as two trimers (C3), and six regulatory PyrI chains organized as three dimers (R2).

It carries out the reaction carbamoyl phosphate + L-aspartate = N-carbamoyl-L-aspartate + phosphate + H(+). Its pathway is pyrimidine metabolism; UMP biosynthesis via de novo pathway; (S)-dihydroorotate from bicarbonate: step 2/3. Its function is as follows. Catalyzes the condensation of carbamoyl phosphate and aspartate to form carbamoyl aspartate and inorganic phosphate, the committed step in the de novo pyrimidine nucleotide biosynthesis pathway. The polypeptide is Aspartate carbamoyltransferase catalytic subunit (Flavobacterium johnsoniae (strain ATCC 17061 / DSM 2064 / JCM 8514 / BCRC 14874 / CCUG 350202 / NBRC 14942 / NCIMB 11054 / UW101) (Cytophaga johnsonae)).